The chain runs to 158 residues: NADH-quinone oxidoreductase subunit B (158 aa).

Cysteine 37, cysteine 38, cysteine 102, and cysteine 132 together coordinate [4Fe-4S] cluster.

The protein belongs to the complex I 20 kDa subunit family. In terms of assembly, NDH-1 is composed of 14 different subunits. Subunits NuoB, C, D, E, F, and G constitute the peripheral sector of the complex. Requires [4Fe-4S] cluster as cofactor.

It is found in the cell inner membrane. The catalysed reaction is a quinone + NADH + 5 H(+)(in) = a quinol + NAD(+) + 4 H(+)(out). Its function is as follows. NDH-1 shuttles electrons from NADH, via FMN and iron-sulfur (Fe-S) centers, to quinones in the respiratory chain. Couples the redox reaction to proton translocation (for every two electrons transferred, four hydrogen ions are translocated across the cytoplasmic membrane), and thus conserves the redox energy in a proton gradient. In Bordetella avium (strain 197N), this protein is NADH-quinone oxidoreductase subunit B.